The chain runs to 1075 residues: MDYLKYGIEVVVKKSEKRKFKLIDYKNIDKNTFFYLCEAEFKGNPKNSRPDITLFINGIPVVIIEAKATLKIDSHLEGISQIRRYEKFSPDLFRFVQFAISYGEEQLYTPTMPNWYKENIHLPAYYWRIRQKINGKKVVKDDIFYILNPSILLEIIRYFIFYRKDEYSKTKTLSKIIARYNQYFATKKAMKRIDEYLSGDSKNKGLIWHWQGSGKTYTMFFIANYFLDKYFSENPVIFFVVDRVDLERQSKEFYEAIQEKKFKTILKRIDSINKLYEVIKSIKMSELSNKVIVRGIYTTTIQKFQYERSKKEKDNNKEKDKDDEDLDLSKPIEEIIKKIEDKLKKEEKEGKIKGLKDLLIILAFIYLKHLKEKNPEEYKKHIENLKKLKDKDKKEEYLINLGNIKRKHILILIDEAHRTQYGILGGMRKITFPNAITFGFTGTPVFKNEKNTFTEFSYPEKGEFYLDVYFIGDSIKDKFTLPLTYQIVKEGDIKSEGIQITLDEEDIKEFIDEWIKRGEDINLFDRKKLPKYINKSKTILLNPKRIDKVAKYIVDRIEEDTENFKFKAMVVAVNRLGCVRFKKALDKYLKEKFGDEAEKWAEVVMTYHHNEEEKEIIEYMKKLKKERNSNDFNEINQIIREEFLNSENPKILIVTDMLLTGFDAPRLKVMYLDKPLYGHRLLQAIARTNRPYPDKEFGLIVDSVGLFKVLTETMALYNMLAEEEIREDFKNNLISSIDEIFQEFKLKLEMVKESLKNLKINDEDLSIDVNTLKTLTKNKDFNNNELKEKLDLIAFYAEDGKNARILKLIDDLKAVIKLYKALGSYPQKIFYIEDIELLSFIYAYLIKKLKPKKKSNRKFWEELISFIHNKMLVDDLTVIEEINLNPDDLDKILKENIGKREIKRAVANYYFILKNSILDKQHDPIYKEILERLERLRRDWIMKRIDDKIYLNAIKNLMELKNNYDKKIKGKSSIERIKESISTYIGENILKDQDIKLNLENTEKLITKMQNLNKLSKLQRKKFKKELSCALLEDLLKELKGKIKDEDAKKVAELSDNLVSEFILKEIWGENYENQ.

The protein belongs to the HsdR family. In terms of assembly, the type I restriction/modification system is composed of three polypeptides R, M and S.

It carries out the reaction Endonucleolytic cleavage of DNA to give random double-stranded fragments with terminal 5'-phosphates, ATP is simultaneously hydrolyzed.. Its function is as follows. The restriction (R) subunit of a type I restriction enzyme that recognizes 5'-CAAN(7)TGG-3' and cleaves a random distance away. The R subunit is required for both endonuclease and ATPase activities but not for modification. After locating a non-methylated recognition site, the enzyme complex serves as a molecular motor that translocates DNA in an ATP-dependent manner until a collision occurs that triggers cleavage. The sequence is that of Putative type I restriction enzyme MjaVIIP endonuclease subunit from Methanocaldococcus jannaschii (strain ATCC 43067 / DSM 2661 / JAL-1 / JCM 10045 / NBRC 100440) (Methanococcus jannaschii).